A 459-amino-acid chain; its full sequence is Putrescine aminotransferase (459 aa).

Residues 150–151 (GT) and Q274 contribute to the pyridoxal 5'-phosphate site. K300 carries the post-translational modification N6-(pyridoxal phosphate)lysine. T332 is a binding site for pyridoxal 5'-phosphate.

The protein belongs to the class-III pyridoxal-phosphate-dependent aminotransferase family. Putrescine aminotransferase subfamily. It depends on pyridoxal 5'-phosphate as a cofactor.

The catalysed reaction is an alkane-alpha,omega-diamine + 2-oxoglutarate = an omega-aminoaldehyde + L-glutamate. It carries out the reaction putrescine + 2-oxoglutarate = 1-pyrroline + L-glutamate + H2O. It catalyses the reaction cadaverine + 2-oxoglutarate = 5-aminopentanal + L-glutamate. It participates in amine and polyamine degradation; putrescine degradation; 4-aminobutanal from putrescine (transaminase route): step 1/1. Its function is as follows. Catalyzes the aminotransferase reaction from putrescine to 2-oxoglutarate, leading to glutamate and 4-aminobutanal, which spontaneously cyclizes to form 1-pyrroline. This is the first step in one of two pathways for putrescine degradation, where putrescine is converted into 4-aminobutanoate (gamma-aminobutyrate or GABA) via 4-aminobutanal. Also functions as a cadaverine transaminase in a a L-lysine degradation pathway to succinate that proceeds via cadaverine, glutarate and L-2-hydroxyglutarate. In Escherichia coli O6:H1 (strain CFT073 / ATCC 700928 / UPEC), this protein is Putrescine aminotransferase.